The chain runs to 252 residues: MGQKVSPTGLRVGVIKTWDSRWYAEKQEYVKWLHQDIKIRKALMKELKGASVSKIEIERTKKEIVIFIRTARVGVVLGQEGKNIAKLVKLVHITIGDRKMEVKINVVEIKNPDTDAQLVANTIAEQIVNRASFRSVQKLAIKKAMKAGAQGIKTSVSGRLGGVDMARTEGYTKGTVPLATLRSDIDFALAEALTTYGQIGVKVWICKGEILSKELVSTSDEKPKFEKRDFNRSNNNRRDQAPKSHPVAKEAK.

In terms of domain architecture, KH type-2 spans Ile-39 to Lys-110. The segment at Thr-218 to Lys-252 is disordered. The span at Ser-219–Lys-252 shows a compositional bias: basic and acidic residues.

The protein belongs to the universal ribosomal protein uS3 family. As to quaternary structure, part of the 30S ribosomal subunit. Forms a tight complex with proteins S10 and S14.

Its function is as follows. Binds the lower part of the 30S subunit head. Binds mRNA in the 70S ribosome, positioning it for translation. The polypeptide is Small ribosomal subunit protein uS3 (Spiroplasma citri).